A 456-amino-acid chain; its full sequence is MLNSAMSVVILAAGKGTRMYSDIPKVLHTLAGKPMVQHVIDAATKLGAAQVHLVYGHGGELLKQTLKDDKLNWVLQAEQLGTGHAMQQAAPFFSDDEDILMLYGDVPLISVETLQRLRDAKPQGGIGLLTVKLDDPSGYGRITRENGKVTGIVEHKDATDEQRQIQEINTGILIANGADLKRWLSKMTNNNAQGEYYITDIIALAYQEGREIAAVHPARISETDGVNNRLQLSRLERIYQAEQAEKLLLSGVMLRDPARFDLRGTLHCGMDVEIDANVIIEGYVTLGHRVKIGAGCIIKNSVIGDDCEISPYSVVEDAHLEAACTIGPFARLRPGAELLAGAHVGNFVEMKKARLGKGSKAGHLTYLGDAEIGDNVNIGAGTITCNYDGANKFKTVIGDDVFVGSDTQLVAPVTVGKGATIAAGTTVTRNVADNELVLSRVPQVHKQGWQRPVKKK.

The segment at M1 to R229 is pyrophosphorylase. Residues L11 to G14, K25, Q76, G81 to T82, Y103 to D105, G140, E154, N169, and N227 each bind UDP-N-acetyl-alpha-D-glucosamine. D105 contributes to the Mg(2+) binding site. N227 contacts Mg(2+). Positions L230–S250 are linker. The segment at G251–K456 is N-acetyltransferase. R333 and K351 together coordinate UDP-N-acetyl-alpha-D-glucosamine. Catalysis depends on H363, which acts as the Proton acceptor. UDP-N-acetyl-alpha-D-glucosamine-binding residues include Y366 and N377. Acetyl-CoA-binding positions include A380, N386–Y387, S405, A423, and R440.

The protein in the N-terminal section; belongs to the N-acetylglucosamine-1-phosphate uridyltransferase family. It in the C-terminal section; belongs to the transferase hexapeptide repeat family. In terms of assembly, homotrimer. Requires Mg(2+) as cofactor.

It localises to the cytoplasm. The catalysed reaction is alpha-D-glucosamine 1-phosphate + acetyl-CoA = N-acetyl-alpha-D-glucosamine 1-phosphate + CoA + H(+). The enzyme catalyses N-acetyl-alpha-D-glucosamine 1-phosphate + UTP + H(+) = UDP-N-acetyl-alpha-D-glucosamine + diphosphate. It participates in nucleotide-sugar biosynthesis; UDP-N-acetyl-alpha-D-glucosamine biosynthesis; N-acetyl-alpha-D-glucosamine 1-phosphate from alpha-D-glucosamine 6-phosphate (route II): step 2/2. Its pathway is nucleotide-sugar biosynthesis; UDP-N-acetyl-alpha-D-glucosamine biosynthesis; UDP-N-acetyl-alpha-D-glucosamine from N-acetyl-alpha-D-glucosamine 1-phosphate: step 1/1. The protein operates within bacterial outer membrane biogenesis; LPS lipid A biosynthesis. In terms of biological role, catalyzes the last two sequential reactions in the de novo biosynthetic pathway for UDP-N-acetylglucosamine (UDP-GlcNAc). The C-terminal domain catalyzes the transfer of acetyl group from acetyl coenzyme A to glucosamine-1-phosphate (GlcN-1-P) to produce N-acetylglucosamine-1-phosphate (GlcNAc-1-P), which is converted into UDP-GlcNAc by the transfer of uridine 5-monophosphate (from uridine 5-triphosphate), a reaction catalyzed by the N-terminal domain. The polypeptide is Bifunctional protein GlmU (Salmonella choleraesuis (strain SC-B67)).